The primary structure comprises 469 residues: Solute carrier family 52, riboflavin transporter, member 3 (469 aa).

Residues methionine 1–histidine 6 are Cytoplasmic-facing. Residues leucine 7–leucine 27 form a helical membrane-spanning segment. Residues proline 28–tyrosine 43 lie on the Extracellular side of the membrane. A helical transmembrane segment spans residues leucine 44–phenylalanine 64. The Cytoplasmic portion of the chain corresponds to glutamine 65 to glutamate 71. The helical transmembrane segment at valine 72–leucine 92 threads the bilayer. The Extracellular segment spans residues tryptophan 93–serine 105. N-linked (GlcNAc...) asparagine glycosylation is present at asparagine 94. The helical transmembrane segment at isoleucine 106–phenylalanine 126 threads the bilayer. At leucine 127 to tyrosine 137 the chain is on the cytoplasmic side. Residues leucine 138–alanine 158 traverse the membrane as a helical segment. Residues glutamine 159–proline 220 are Extracellular-facing. Residue asparagine 168 is glycosylated (N-linked (GlcNAc...) asparagine). The chain crosses the membrane as a helical span at residues leucine 221–leucine 241. Residues glutamine 242–proline 297 lie on the Cytoplasmic side of the membrane. Serine 251 bears the Phosphoserine mark. Residues arginine 266 to glutamate 290 form a disordered region. Residues alanine 298–leucine 318 form a helical membrane-spanning segment. Over proline 319–histidine 335 the chain is Extracellular. A helical transmembrane segment spans residues leucine 336–proline 356. The Cytoplasmic portion of the chain corresponds to histidine 357–proline 361. Residues phenylalanine 362–valine 382 traverse the membrane as a helical segment. The Extracellular portion of the chain corresponds to methionine 383 to glutamate 396. Residues isoleucine 397 to leucine 417 traverse the membrane as a helical segment. Residues glycine 418 to serine 427 lie on the Cytoplasmic side of the membrane. A helical membrane pass occupies residues alanine 428 to phenylalanine 448. Residues proline 449 to alanine 469 are Extracellular-facing.

The protein belongs to the riboflavin transporter family.

Its subcellular location is the cell membrane. It catalyses the reaction riboflavin(in) = riboflavin(out). In terms of biological role, plasma membrane transporter mediating the uptake by cells of the water soluble vitamin B2/riboflavin that plays a key role in biochemical oxidation-reduction reactions of the carbohydrate, lipid, and amino acid metabolism. The chain is Solute carrier family 52, riboflavin transporter, member 3 (SLC52A3) from Ailuropoda melanoleuca (Giant panda).